We begin with the raw amino-acid sequence, 448 residues long: Glutamate--tRNA ligase 1 (448 aa).

The 'HIGH' region motif lies at 9–19 (PSPTGKLHIGN). The short motif at 240-244 (KISKR) is the 'KMSKS' region element. Lys-243 contributes to the ATP binding site.

The protein belongs to the class-I aminoacyl-tRNA synthetase family. Glutamate--tRNA ligase type 1 subfamily. Monomer.

The protein resides in the cytoplasm. The catalysed reaction is tRNA(Glu) + L-glutamate + ATP = L-glutamyl-tRNA(Glu) + AMP + diphosphate. Catalyzes the attachment of glutamate to tRNA(Glu) in a two-step reaction: glutamate is first activated by ATP to form Glu-AMP and then transferred to the acceptor end of tRNA(Glu). This chain is Glutamate--tRNA ligase 1, found in Orientia tsutsugamushi (strain Ikeda) (Rickettsia tsutsugamushi).